The primary structure comprises 361 residues: Carbon monoxide-induced hydrogenase (361 aa).

Residues Cys-64, Cys-67, Cys-355, and Cys-358 each coordinate Ni(2+).

To E.coli formate hydrogenlyase hydrogenase isozyme 3 and to bovine mitochondrial NADH-ubiquinone oxidoreductase. Ni(2+) serves as cofactor.

Functionally, the carbon monoxide dehydrogenase (CODH) oxidizes carbon monoxide coupled, via CooF, to the reduction of a hydrogen cation by a hydrogenase (probably CooH). This Rhodospirillum rubrum protein is Carbon monoxide-induced hydrogenase (cooH).